A 490-amino-acid polypeptide reads, in one-letter code: Cardiolipin synthase A (490 aa).

Transmembrane regions (helical) follow at residues 4–24 (YLFT…IIIV) and 39–59 (AAWL…WFLL). PLD phosphodiesterase domains lie at 220–247 (MDLR…VDPY) and 403–430 (KKGL…DMRS). Residues His225, Lys227, Asp232, His408, Lys410, and Asp415 contribute to the active site.

Belongs to the phospholipase D family. Cardiolipin synthase subfamily. ClsA sub-subfamily.

It is found in the cell membrane. It carries out the reaction 2 a 1,2-diacyl-sn-glycero-3-phospho-(1'-sn-glycerol) = a cardiolipin + glycerol. Functionally, catalyzes the reversible phosphatidyl group transfer from one phosphatidylglycerol molecule to another to form cardiolipin (CL) (diphosphatidylglycerol) and glycerol. The chain is Cardiolipin synthase A from Buchnera aphidicola subsp. Baizongia pistaciae (strain Bp).